The chain runs to 578 residues: E3 ubiquitin-protein ligase hrd-like protein 1 (578 aa).

The helical transmembrane segment at 32–52 threads the bilayer; it reads GYLALSLCVAFIASASVFTHF. The N-linked (GlcNAc...) asparagine glycan is linked to Asn68. Transmembrane regions (helical) follow at residues 76–96, 101–121, 134–154, 163–183, 202–222, 230–250, and 286–306; these read FGIN…HYIL, LIWV…KLII, VAAR…LSVV, VMPW…QFVT, SFIS…VSRF, PAVL…YILF, and FLSY…SIFF. The RING-type; atypical zinc-finger motif lies at 350–388; sequence CIVCWELLGTSRRLPCSHQFHDWCLMWWLAQDSSCPTCR. Residues 447–489 enclose the CUE domain; the sequence is QLQSMLETVLEMFPQMSPETILADLRQSGSAQSTIENILEGRM. The N-linked (GlcNAc...) asparagine glycan is linked to Asn492.

Its subcellular location is the membrane. Its function is as follows. Proposed to have a role in neuroprotection. The protein is E3 ubiquitin-protein ligase hrd-like protein 1 of Caenorhabditis briggsae.